Here is a 108-residue protein sequence, read N- to C-terminus: Evasin P1156 (108 aa).

The N-terminal stretch at 1 to 28 (MEVKTYAFLQIAVFIFLGMQIFASLTDA) is a signal peptide. Intrachain disulfides connect Cys-41-Cys-63, Cys-45-Cys-65, and Cys-56-Cys-76. Asn-44 is a glycosylation site (N-linked (GlcNAc...) asparagine). Positions 89-108 (NPSDSEIEAAKPKRSDTLSH) are disordered. The span at 96–108 (EAAKPKRSDTLSH) shows a compositional bias: basic and acidic residues.

It localises to the secreted. Salivary chemokine-binding protein which has chemokine-neutralizing activity and binds to host chemokines CXCL1, CXCL2, CXCL3, CXCL5, CXCL6 and CXCL8. This chain is Evasin P1156, found in Ixodes ricinus (Common tick).